Consider the following 291-residue polypeptide: MTVDSKPQLQRLAADVDVDLMCRLLEEDGAFILKDLLPLDVVESFNRELDVQMAIPPPKGERLLADKYPPHFKYVPNVATTCPTFRNNILINPVIHAICEGYFQRTGDYWLSAAFLREIESGMPAQPFHRDDATHPLMHHQPLEAPPISLSVIFPLTEFTEENGATEVILGSHRWMEVGTPERDQAVLATMDPGDVLVVRQRVVHAGGGNRTTTGDPRRVVLAYFNSCQLTPFETYRTMPRETVESMTVLGQRMLGWRTMKPSDPNIVGINIIDDKRLENVLQLKATDLPA.

Belongs to the PhyH family. Homodimer. The cofactor is Fe cation.

It carries out the reaction fumitremorgin B + 2-oxoglutarate + AH2 + 2 O2 = verruculogen + succinate + A + CO2 + H2O. It participates in mycotoxin biosynthesis. Verruculogen synthase; part of the gene cluster that mediates the biosynthesis of fumitremorgins, indole alkaloids that carry not only intriguing chemical structures, but also interesting biological and pharmacological activities. The biosynthesis of fumitremorgin-type alkaloids begins by condensation of the two amino acids L-tryptophan and L-proline to brevianamide F, catalyzed by the non-ribosomal peptide synthetase ftmPS/ftmA. Brevianamide F is then prenylated by the prenyltransferase ftmPT1/ftmB in the presence of dimethylallyl diphosphate, resulting in the formation of tryprostatin B. The three cytochrome P450 monooxygenases, ftmP450-1/ftmC, ftmP450-2/ftmE and ftmP450-3/FtmG, are responsible for the conversion of tryprostatin B to 6-hydroxytryprostatin B, tryprostatin A to fumitremorgin C and fumitremorgin C to 12,13-dihydroxyfumitremorgin C, respectively. The putative methyltransferase ftmMT/ftmD is expected for the conversion of 6-hydroxytryprostatin B to tryprostatin A. FtmPT2/FtmH catalyzes the prenylation of 12,13-dihydroxyfumitre-morgin C in the presence of dimethylallyl diphosphate, resulting in the formation of fumitremorgin B. Fumitremorgin B is further converted to verruculogen by ftmOx1/ftmF via the insertion of an endoperoxide bond between the two prenyl moieties. Finally, verruculogen is further converted to fumitremorgin A by the verruculogen prenyltransferase ftmPT3. The polypeptide is Verruculogen synthase (Neosartorya fischeri (strain ATCC 1020 / DSM 3700 / CBS 544.65 / FGSC A1164 / JCM 1740 / NRRL 181 / WB 181) (Aspergillus fischerianus)).